An 87-amino-acid polypeptide reads, in one-letter code: UPF0250 protein ESA_02696 (87 aa).

It belongs to the UPF0250 family.

In Cronobacter sakazakii (strain ATCC BAA-894) (Enterobacter sakazakii), this protein is UPF0250 protein ESA_02696.